The sequence spans 1881 residues: Endoribonuclease Dicer-S (1881 aa).

One can recognise a Helicase ATP-binding domain in the interval 41–217; that stretch reads LLEAALDHNI…DLEEKIQNLE (177 aa). Position 54–61 (54–61) interacts with ATP; the sequence is LNSGSGKT. Residues 165–168 carry the DECH box motif; sequence DECH. One can recognise a Helicase C-terminal domain in the interval 425-594; the sequence is SFPSPFTNIL…SMDCGNTESE (170 aa). The 93-residue stretch at 622 to 714 folds into the Dicer dsRNA-binding fold domain; the sequence is AIGHINRYCA…MPVGKETVKY (93 aa). The region spanning 887 to 1034 is the PAZ domain; sequence KFVEDIEKSE…LVPELCAIHP (148 aa). 2 RNase III domains span residues 1249–1380 and 1625–1783; these read TSDI…ETSG and FENF…MDSG. 6 residues coordinate Mg(2+): Glu1293, Asp1371, Glu1374, Glu1664, Asp1769, and Glu1772. The 66-residue stretch at 1808–1873 folds into the DRBM domain; sequence VPRSPVRELL…ARRALRSLKA (66 aa).

This sequence belongs to the helicase family. Dicer subfamily. In terms of assembly, component of the RISC loading complex (RLC), or micro-RNA (miRNA) loading complex (miRLC), which is composed of dicer1, ago2 and tarbp2; dicer1 and tarbp2 are required to process precursor miRNAs (pre-miRNAs) to mature miRNAs and then load them onto ago2. Note that the trimeric RLC/miRLC is also referred to as RISC. Requires Mg(2+) as cofactor. Mn(2+) serves as cofactor.

The protein localises to the cytoplasm. The enzyme catalyses Endonucleolytic cleavage to 5'-phosphomonoester.. Functionally, double-stranded RNA (dsRNA) endoribonuclease playing a central role in short dsRNA-mediated post-transcriptional gene silencing. Cleaves naturally occurring long dsRNAs and short hairpin pre-microRNAs (miRNA) into fragments of twenty-one to twenty-three nucleotides with 3' overhang of two nucleotides, producing respectively short interfering RNAs (siRNA) and mature microRNAs. SiRNAs and miRNAs serve as guide to direct the RNA-induced silencing complex (RISC) to complementary RNAs to degrade them or prevent their translation. Gene silencing mediated by siRNAs, also called RNA interference, controls the elimination of transcripts from mobile and repetitive DNA elements of the genome but also the degradation of exogenous RNA of viral origin for instance. The miRNA pathway on the other side is a mean to specifically regulate the expression of target genes. During embryonic development, at the left-right organizer, post-transcriptionally regulates the expression of dand5 in flow sensor cells. In post-flow stages, acts along with Bicc1 to repress dand5 mRNA translation and decay. Decreased Dand5 expression lifts repression of Nodal and defines leftness by induction of the lateral plate mesoderm Nodal signaling cascade. The polypeptide is Endoribonuclease Dicer-S (dicer1.S) (Xenopus laevis (African clawed frog)).